The primary structure comprises 100 residues: Urease subunit gamma (100 aa).

It belongs to the urease gamma subunit family. In terms of assembly, heterotrimer of UreA (gamma), UreB (beta) and UreC (alpha) subunits. Three heterotrimers associate to form the active enzyme.

The protein localises to the cytoplasm. The catalysed reaction is urea + 2 H2O + H(+) = hydrogencarbonate + 2 NH4(+). It functions in the pathway nitrogen metabolism; urea degradation; CO(2) and NH(3) from urea (urease route): step 1/1. The polypeptide is Urease subunit gamma (Haemophilus influenzae (strain 86-028NP)).